The following is a 285-amino-acid chain: Hydroxyacylglutathione hydrolase, mitochondrial (285 aa).

A mitochondrion-targeting transit peptide spans 1–10 (MKFLLQQIRN). The Zn(2+) site is built by His-69, His-71, Asp-73, His-74, His-131, Asp-154, and His-198.

It depends on Zn(2+) as a cofactor.

The protein localises to the mitochondrion matrix. It catalyses the reaction an S-(2-hydroxyacyl)glutathione + H2O = a 2-hydroxy carboxylate + glutathione + H(+). The catalysed reaction is (R)-S-lactoylglutathione + H2O = (R)-lactate + glutathione + H(+). The protein operates within secondary metabolite metabolism; methylglyoxal degradation; (R)-lactate from methylglyoxal: step 2/2. Inhibited by various thiol compounds such as glutathione and coenzyme A. In terms of biological role, thiolesterase that catalyzes the hydrolysis of S-D-lactoylglutathione to form glutathione and D-lactic acid. Involved in the metabolism of methylglyoxal, a toxic compound for yeast proliferation, by converting methylglyoxal to lactate via S-D-lactoylglutathione by sequential enzyme reactions catalyzed by glyoxalase I and glyoxalase II. This is Hydroxyacylglutathione hydrolase, mitochondrial from Saccharomyces cerevisiae (strain ATCC 204508 / S288c) (Baker's yeast).